A 264-amino-acid chain; its full sequence is Transmembrane protein 41A (264 aa).

The first 17 residues, 1 to 17 (MHSLLGLLLVFAGSTFA), serve as a signal peptide directing secretion. 5 consecutive transmembrane segments (helical) span residues 67 to 87 (VYVF…AIPG), 90 to 110 (FLNV…LCCV), 153 to 173 (LFFF…FLNL), 175 to 195 (APIL…GLIP), and 219 to 239 (WETA…GTLI). Residues 96–207 (GALFGPWLGL…FICVQTGSIL (112 aa)) form a VTT domain region.

The protein belongs to the TMEM41 family.

It localises to the membrane. The polypeptide is Transmembrane protein 41A (TMEM41A) (Bos taurus (Bovine)).